A 93-amino-acid chain; its full sequence is Mitochondrial import inner membrane translocase subunit TIM9 (93 aa).

The short motif at 43–67 is the Twin CX3C motif element; that stretch reads CFVDCVDSFTRKSLQKQEETCVMRC. 2 disulfide bridges follow: C43–C67 and C47–C63.

The protein belongs to the small Tim family. Heterohexamer; composed of 3 copies of TIM9 and 3 copies of TIM10, named soluble 70 kDa complex. The complex associates with the TIM22 component of the TIM22 complex. Interacts with multi-pass transmembrane proteins in transit. As to expression, expressed in roots, flowers, young cotyledons and leaves.

The protein localises to the mitochondrion intermembrane space. Functionally, mitochondrial intermembrane chaperone that participates in the import and insertion of multi-pass transmembrane proteins into the mitochondrial inner membrane. May also be required for the transfer of beta-barrel precursors from the TOM complex to the sorting and assembly machinery (SAM complex) of the outer membrane. Acts as a chaperone-like protein that protects the hydrophobic precursors from aggregation and guide them through the mitochondrial intermembrane space. The polypeptide is Mitochondrial import inner membrane translocase subunit TIM9 (TIM9) (Arabidopsis thaliana (Mouse-ear cress)).